Consider the following 572-residue polypeptide: Putative inorganic phosphate transporter C8E4.01c (572 aa).

Topologically, residues 1–47 are cytoplasmic; the sequence is MAFGSKILNIGSKSDEYNDDAVPLDQVEEGAQERRYYLGLTKREFKL. A phosphoserine mark is found at Ser12 and Ser14. The helical transmembrane segment at 48-68 threads the bilayer; the sequence is MMLAGVGFFLDSYDLFIINLV. Residues 69 to 99 lie on the Extracellular side of the membrane; it reads TPIFEYLYWGGIEKGPTGKGHYPSGIRGLVN. The helical transmembrane segment at 100–120 threads the bilayer; it reads ASANIGNIFGQLLFGFMGDFF. The Cytoplasmic portion of the chain corresponds to 121-123; it reads GRK. A helical membrane pass occupies residues 124–144; sequence FVYGKEMVIVIIATVLVIAMP. Topologically, residues 145-153 are extracellular; it reads KSIHSPLSK. The helical transmembrane segment at 154 to 174 threads the bilayer; it reads MMWVFCWRWLLGVGIGGDYPM. Over 175 to 193 the chain is Cytoplasmic; the sequence is SAAITSERSKIKRRGTLIS. A helical transmembrane segment spans residues 194–214; that stretch reads LIFAFQGFGTLAGAIVTIILL. At 215-229 the chain is on the extracellular side; the sequence is GCFEHPLNREGHYHK. The chain crosses the membrane as a helical span at residues 230–250; that stretch reads LEGVWRLQFGLALVPAIGVLI. Over 251 to 346 the chain is Cytoplasmic; the sequence is PRLIMKESKS…TYFRQWRHFK (96 aa). The tract at residues 265 to 297 is disordered; sequence KALNSAEGKDPKAFFNTDDEDNMKKSSSHGDSE. Residues 286–296 are compositionally biased toward basic and acidic residues; that stretch reads NMKKSSSHGDS. 2 positions are modified to phosphoserine: Ser292 and Ser296. A helical membrane pass occupies residues 347–367; the sequence is HLLGTSVCWFLLDIAFYGVNL. The Extracellular segment spans residues 368–395; the sequence is NQSVILKNIGFSTGTNEYRTLMKNAIGN. Residues 396–416 traverse the membrane as a helical segment; that stretch reads LIIAVAGYVPGYWFNVFLVEI. At 417-420 the chain is on the cytoplasmic side; the sequence is LGRK. Residues 421–441 form a helical membrane-spanning segment; it reads WIQLQGFVITGLMFAILAGRW. Over 442–449 the chain is Extracellular; it reads NEISTGGR. A helical transmembrane segment spans residues 450–470; that stretch reads FACFVIAQLFSNFGPNSTTFI. The Cytoplasmic portion of the chain corresponds to 471–485; the sequence is YPAEVFPARVRGTAH. The chain crosses the membrane as a helical span at residues 486 to 506; the sequence is GVSAALGKCGAILASLLFNFL. The Extracellular segment spans residues 507-508; that stretch reads TG. Residues 509-529 form a helical membrane-spanning segment; that stretch reads VIGYGNVMWIFCGCMWGGILF. Topologically, residues 530–572 are cytoplasmic; it reads TLLLPETKGRDADEIDRLELFYGKDGKVQCDSKWKSWYFNGIF.

Belongs to the major facilitator superfamily. Sugar transporter (TC 2.A.1.1) family.

Its subcellular location is the membrane. In terms of biological role, high-affinity transporter for external inorganic phosphate. This is Putative inorganic phosphate transporter C8E4.01c from Schizosaccharomyces pombe (strain 972 / ATCC 24843) (Fission yeast).